The sequence spans 261 residues: tRNA U34 carboxymethyltransferase (261 aa).

Carboxy-S-adenosyl-L-methionine-binding positions include Lys-25, Trp-39, Lys-44, Gly-63, 114–115 (VE), Tyr-135, and Arg-250.

It belongs to the class I-like SAM-binding methyltransferase superfamily. CmoB family. In terms of assembly, homotetramer.

It catalyses the reaction carboxy-S-adenosyl-L-methionine + 5-hydroxyuridine(34) in tRNA = 5-carboxymethoxyuridine(34) in tRNA + S-adenosyl-L-homocysteine + H(+). Its function is as follows. Catalyzes carboxymethyl transfer from carboxy-S-adenosyl-L-methionine (Cx-SAM) to 5-hydroxyuridine (ho5U) to form 5-carboxymethoxyuridine (cmo5U) at position 34 in tRNAs. This Helicobacter pylori (strain ATCC 700392 / 26695) (Campylobacter pylori) protein is tRNA U34 carboxymethyltransferase.